Consider the following 305-residue polypeptide: MDTHLPFQTLPVSTPLPVSSSSLTDVLQTIAALQACPTSCIPSTSTGMLSPNLPFSATIPRVNLFPPSQPANSLILPTIPAQPFIPNPSLLQANPSAVEALANALFATTSRRASCPEPPASSQATVTLQVPSTGSPERRRYSETNMEVLLREQLAQLMPPTSQLPGMPGCYYQHVPAAGTSGIQGSLDAALMGAVPLAMNSMAHSRRAANHRKARTIYGTTQTQQLEDMFKGQMYVVGAERENLAQRLGLSPSQVRIWFQNRRSKHRRKQQEEQQSTTLEEKSEEIGKDEEEDDEEDEDDVKVLN.

Disordered stretches follow at residues 113 to 140 (ASCP…ERRR) and 262 to 305 (RRSK…KVLN). Over residues 120-135 (ASSQATVTLQVPSTGS) the composition is skewed to polar residues. Positions 211–270 (HRKARTIYGTTQTQQLEDMFKGQMYVVGAERENLAQRLGLSPSQVRIWFQNRRSKHRRKQ) form a DNA-binding region, homeobox. Acidic residues predominate over residues 287–305 (GKDEEEDDEEDEDDVKVLN).

The protein belongs to the distal-less homeobox family.

It is found in the nucleus. In terms of biological role, probable transcription factor. Required for differentiation of AIY interneurons, acting downstream of LIM/homeobox protein ttx-3. Modulates gene expression, acting downstream of AMP kinase aak-2/AMPK signaling. Modulates lifespan. The chain is Homeobox protein ceh-23 (ceh-23) from Caenorhabditis elegans.